We begin with the raw amino-acid sequence, 108 residues long: UPF0060 membrane protein YnfA (108 aa).

At 1 to 5 (MIKTT) the chain is on the periplasmic side. The chain crosses the membrane as a helical span at residues 6–26 (LLFFATALCEIIGCFLPWLWL). At 27–30 (KRNA) the chain is on the cytoplasmic side. Residues 31 to 51 (SIWLLLPAGISLALFVWLLTL) traverse the membrane as a helical segment. Residues 52 to 60 (HPAASGRVY) lie on the Periplasmic side of the membrane. The helical transmembrane segment at 61 to 81 (AAYGGVYVCTALMWLRVVDGV) threads the bilayer. Residues 82–84 (KLT) lie on the Cytoplasmic side of the membrane. Residues 85–105 (LYDWTGPLIALCGMLIIVVGW) traverse the membrane as a helical segment. Residues 106-108 (GRT) lie on the Periplasmic side of the membrane.

This sequence belongs to the UPF0060 family.

The protein localises to the cell inner membrane. This chain is UPF0060 membrane protein YnfA, found in Escherichia coli O157:H7.